Consider the following 139-residue polypeptide: MRIMGLDVGSKTVGVAISDPLGFTAQGLEIIKIDEEKAEFGFTRLEELVKQYQVEQFVIGLPKNMNNTNGPRVDASITYGNHIEHLFGLPVHYQDERLTTVEAERMLIEQADISRGKRKKVIDKLAAQLILQNYLNRNF.

Belongs to the YqgF nuclease family.

It localises to the cytoplasm. Functionally, could be a nuclease involved in processing of the 5'-end of pre-16S rRNA. The polypeptide is Putative pre-16S rRNA nuclease (Streptococcus pyogenes serotype M3 (strain ATCC BAA-595 / MGAS315)).